The chain runs to 104 residues: Large ribosomal subunit protein bL28 (104 aa).

The protein belongs to the bacterial ribosomal protein bL28 family.

This is Large ribosomal subunit protein bL28 from Wolbachia sp. subsp. Brugia malayi (strain TRS).